The primary structure comprises 515 residues: MEFFLDPSIWAGLLTLVVLEVVLGIDNLIFVAILSEKLPPNQRDKARLIGLGLALIMRLALLSLISWVVTLTSPIISNNFFSLSIRDLILLIGGLFLLFKATIELHERLENEDHENTENKNYASFWAVVIQIVVLDAVFSLDAIITAVGMVNQLLIMMIAVVLATILMLLASKALTNFINIHQTVVVLCLSFLLMIGFSLVAEALKFYIPKGYLYAAIGFSILIEIFNQIARHNFMKNQSRKPMRQRAAEAILRLMIREKNNNKNRIKTDNKAEIVLSSSLETETFKDEEKYMINGVLTLAGRSIKSIMTPRSNISWVNTEKTINEIRLQLLDTPHNLFPVCKGELDEIIGIVRAKELLVAIEKNIDVYTFASQIPPIIIPDTLDPINLLGVLRRAQGSFVIVSNEFGVVQGLITPLDVLEAIAGEFPDADETPDIIKEQNSWLVKGETDLHSLQQLLNTKELIKQDDCASLGGLLISQKGQLPLPGETIKINSFSFHIVNATEYRIDLVRITKN.

The next 7 membrane-spanning stretches (helical) occupy residues 14–34 (LTLVVLEVVLGIDNLIFVAIL), 49–69 (IGLGLALIMRLALLSLISWVV), 79–99 (NFFSLSIRDLILLIGGLFLLF), 125–145 (FWAVVIQIVVLDAVFSLDAII), 150–170 (MVNQLLIMMIAVVLATILMLL), 185–205 (VVVLCLSFLLMIGFSLVAEAL), and 207–227 (FYIPKGYLYAAIGFSILIEIF). CBS domains lie at 309 to 368 (MTPR…NIDV) and 372 to 432 (ASQI…DADE).

This sequence belongs to the UPF0053 family.

It localises to the cell membrane. In Buchnera aphidicola subsp. Schizaphis graminum (strain Sg), this protein is UPF0053 protein BUsg_314.